Consider the following 176-residue polypeptide: 3-hydroxydecanoyl-[acyl-carrier-protein] dehydratase (176 aa).

H75 is an active-site residue.

Belongs to the thioester dehydratase family. FabA subfamily. As to quaternary structure, homodimer.

It is found in the cytoplasm. The enzyme catalyses a (3R)-hydroxyacyl-[ACP] = a (2E)-enoyl-[ACP] + H2O. It catalyses the reaction (3R)-hydroxydecanoyl-[ACP] = (2E)-decenoyl-[ACP] + H2O. It carries out the reaction (2E)-decenoyl-[ACP] = (3Z)-decenoyl-[ACP]. The protein operates within lipid metabolism; fatty acid biosynthesis. Necessary for the introduction of cis unsaturation into fatty acids. Catalyzes the dehydration of (3R)-3-hydroxydecanoyl-ACP to E-(2)-decenoyl-ACP and then its isomerization to Z-(3)-decenoyl-ACP. Can catalyze the dehydratase reaction for beta-hydroxyacyl-ACPs with saturated chain lengths up to 16:0, being most active on intermediate chain length. This Actinobacillus pleuropneumoniae serotype 5b (strain L20) protein is 3-hydroxydecanoyl-[acyl-carrier-protein] dehydratase.